We begin with the raw amino-acid sequence, 201 residues long: Auxin-binding protein 1 (201 aa).

A signal peptide spans 1–38 (MAPDLSELAAAAAARGAYLAGVGVAVLLAASFLPVAES). C40 and C193 are disulfide-bonded. Zn(2+) is bound by residues H95, H97, and E101. N133 carries an N-linked (GlcNAc...) asparagine glycan. H144 is a binding site for Zn(2+). The short motif at 198–201 (KDEL) is the Prevents secretion from ER element.

As to quaternary structure, homodimer. In terms of processing, glycosylated. In terms of tissue distribution, expressed in roots, coleoptiles, leaves, stems, tassels and ears.

The protein localises to the endoplasmic reticulum lumen. In terms of biological role, receptor for the plant hormone auxin. The protein is Auxin-binding protein 1 of Zea mays (Maize).